The following is a 1353-amino-acid chain: Trifunctional purine biosynthetic protein adenosine-3 (1353 aa).

One can recognise an ATP-grasp domain in the interval 114–321 (KDFMLRHGIP…LFDVMEACCS (208 aa)). Residues 193–196 (EELL), Glu-200, Arg-223, and Asn-232 each bind ATP. Positions 291 and 293 each coordinate Mg(2+). An AIRS domain region spans residues 441-1155 (GLSYKDSGVD…QKMLSQRRKR (715 aa)). Phosphoserine occurs at positions 814 and 816. The GART domain stretch occupies residues 1153–1353 (RKRVAVLISG…ALISPEVSSQ (201 aa)). 1164–1166 (GSN) contacts N(1)-(5-phospho-beta-D-ribosyl)glycinamide. (6R)-10-formyltetrahydrofolate contacts are provided by residues Arg-1219, 1244-1247 (MRVL), and Asn-1261. His-1263 serves as the catalytic Proton donor. 1295-1299 (DEGVD) contacts (6R)-10-formyltetrahydrofolate. A N(1)-(5-phospho-beta-D-ribosyl)glycinamide-binding site is contributed by 1325-1328 (HKAE).

In the N-terminal section; belongs to the GARS family. It in the central section; belongs to the AIR synthase family. This sequence in the C-terminal section; belongs to the GART family. Homodimer. It depends on Mg(2+) as a cofactor. Mn(2+) is required as a cofactor.

It catalyses the reaction 5-phospho-beta-D-ribosylamine + glycine + ATP = N(1)-(5-phospho-beta-D-ribosyl)glycinamide + ADP + phosphate + H(+). The catalysed reaction is 2-formamido-N(1)-(5-O-phospho-beta-D-ribosyl)acetamidine + ATP = 5-amino-1-(5-phospho-beta-D-ribosyl)imidazole + ADP + phosphate + H(+). It carries out the reaction N(1)-(5-phospho-beta-D-ribosyl)glycinamide + (6R)-10-formyltetrahydrofolate = N(2)-formyl-N(1)-(5-phospho-beta-D-ribosyl)glycinamide + (6S)-5,6,7,8-tetrahydrofolate + H(+). It functions in the pathway purine metabolism; IMP biosynthesis via de novo pathway; 5-amino-1-(5-phospho-D-ribosyl)imidazole from N(2)-formyl-N(1)-(5-phospho-D-ribosyl)glycinamide: step 2/2. The protein operates within purine metabolism; IMP biosynthesis via de novo pathway; N(1)-(5-phospho-D-ribosyl)glycinamide from 5-phospho-alpha-D-ribose 1-diphosphate: step 2/2. Its pathway is purine metabolism; IMP biosynthesis via de novo pathway; N(2)-formyl-N(1)-(5-phospho-D-ribosyl)glycinamide from N(1)-(5-phospho-D-ribosyl)glycinamide (10-formyl THF route): step 1/1. Functionally, trifunctional enzyme that catalyzes three distinct reactions as part of the 'de novo' inosine monophosphate biosynthetic pathway. The protein is Trifunctional purine biosynthetic protein adenosine-3 of Drosophila melanogaster (Fruit fly).